We begin with the raw amino-acid sequence, 163 residues long: Sperm acrosome membrane-associated protein 3 (163 aa).

A signal peptide spans 1–35 (MEAGSWAPRRWPRPPGIVLLALASVLSSLLSSGQA). The C-type lysozyme domain occupies 36 to 163 (RVYSRCELAR…LSDWVDGCEL (128 aa)). Disulfide bonds link Cys-41–Cys-161, Cys-65–Cys-149, Cys-99–Cys-114, and Cys-110–Cys-128.

Belongs to the glycosyl hydrolase 22 family. As to quaternary structure, interacts with ASTL.

Its subcellular location is the secreted. In terms of biological role, sperm surface membrane protein that may be involved in sperm-egg plasma membrane adhesion and fusion during fertilization. It could be a potential receptor for the egg oligosaccharide residue N-acetylglucosamine, which is present in the extracellular matrix over the egg plasma membrane. The processed form has no detectable bacteriolytic activity in vitro. In Bos taurus (Bovine), this protein is Sperm acrosome membrane-associated protein 3 (SPACA3).